Here is a 303-residue protein sequence, read N- to C-terminus: Glutathione transport system permease protein GsiD (303 aa).

6 helical membrane passes run 40 to 60 (AMTA…ARWI), 105 to 125 (LAAG…LGLL), 144 to 164 (LFAF…GSGI), 165 to 185 (ANVI…LVRG), 222 to 242 (IVVF…SLSF), and 266 to 286 (VIAP…VLAF). Positions 101–290 (AQISLAAGVF…LTVLAFNLLG (190 aa)) constitute an ABC transmembrane type-1 domain.

This sequence belongs to the binding-protein-dependent transport system permease family. As to quaternary structure, the complex is composed of two ATP-binding proteins (GsiA), two transmembrane proteins (GsiC and GsiD) and a solute-binding protein (GsiB).

The protein resides in the cell inner membrane. Part of the ABC transporter complex GsiABCD involved in glutathione import. Probably responsible for the translocation of the substrate across the membrane. In Escherichia coli O6:K15:H31 (strain 536 / UPEC), this protein is Glutathione transport system permease protein GsiD.